Here is a 130-residue protein sequence, read N- to C-terminus: DNA-directed RNA polymerase subunit omega (130 aa).

Residues serine 107 to isoleucine 130 form a disordered region. Positions histidine 115–isoleucine 130 are enriched in acidic residues.

It belongs to the RNA polymerase subunit omega family. The RNAP catalytic core consists of 2 alpha, 1 beta, 1 beta' and 1 omega subunit. When a sigma factor is associated with the core the holoenzyme is formed, which can initiate transcription.

The enzyme catalyses RNA(n) + a ribonucleoside 5'-triphosphate = RNA(n+1) + diphosphate. Promotes RNA polymerase assembly. Latches the N- and C-terminal regions of the beta' subunit thereby facilitating its interaction with the beta and alpha subunits. The polypeptide is DNA-directed RNA polymerase subunit omega (Wolbachia pipientis subsp. Culex pipiens (strain wPip)).